A 255-amino-acid polypeptide reads, in one-letter code: Urease accessory protein UreD 1 (255 aa).

Belongs to the UreD family. As to quaternary structure, ureD, UreF and UreG form a complex that acts as a GTP-hydrolysis-dependent molecular chaperone, activating the urease apoprotein by helping to assemble the nickel containing metallocenter of UreC. The UreE protein probably delivers the nickel.

Its subcellular location is the cytoplasm. Functionally, required for maturation of urease via the functional incorporation of the urease nickel metallocenter. In Streptomyces griseus subsp. griseus (strain JCM 4626 / CBS 651.72 / NBRC 13350 / KCC S-0626 / ISP 5235), this protein is Urease accessory protein UreD 1.